The following is an 88-amino-acid chain: Small ribosomal subunit protein bS20 (88 aa).

The protein belongs to the bacterial ribosomal protein bS20 family.

Functionally, binds directly to 16S ribosomal RNA. This is Small ribosomal subunit protein bS20 from Methylorubrum populi (strain ATCC BAA-705 / NCIMB 13946 / BJ001) (Methylobacterium populi).